Consider the following 309-residue polypeptide: Clotting factor G beta subunit (309 aa).

The signal sequence occupies residues 1 to 31; that stretch reads MDISFLVFITLSMALFSSNVTGTSVTSRVRR. Cystine bridges form between cysteine 38–cysteine 158, cysteine 74–cysteine 90, cysteine 205–cysteine 227, and cysteine 238–cysteine 268. Positions 47–292 constitute a Peptidase S1 domain; the sequence is IIGGGIATPH…YVNWLQEITF (246 aa). Histidine 89 serves as the catalytic Charge relay system. Asparagine 100 is a glycosylation site (N-linked (GlcNAc...) asparagine). Aspartate 138 (charge relay system) is an active-site residue. A glycan (N-linked (GlcNAc...) asparagine) is linked at asparagine 206. Serine 242 acts as the Charge relay system in catalysis.

This sequence belongs to the peptidase S1 family. As to quaternary structure, clotting factor G is a heterodimer composed of two non-covalently associated subunits, alpha and beta. Upon activation, converted to a two-chain active form linked by a disulfide bond. Forms a covalent heterodimer with intracellular coagulation inhibitor 3/LICI-3. Expressed in the hemocytes (at protein level).

The catalysed reaction is Selective cleavage of 98-Arg-|-Ile-99 bond in Limulus proclotting enzyme to form active clotting enzyme.. Its activity is regulated as follows. Binding to (1-&gt;3)-beta-D-glucan to alpha subunit, induces autocatalysis and activation of beta subunit. Inhibited by intracellular coagulation inhibitor 3/LICI-3 and to a lesser extend by intracellular coagulation inhibitor 2/LICI-2. Its function is as follows. Component of the heterodimer clotting factor G which may play a role in defense mechanisms against fungi. Initiates a (1-&gt;3)-beta-glucan-sensing clotting pathway whereby the alpha subunit binds to glucans containing (1-&gt;3)-beta linkages, which are components of the fungal cell wall, and the beta subunit catalyzes the activation of proclotting enzyme. The polypeptide is Clotting factor G beta subunit (Tachypleus tridentatus (Japanese horseshoe crab)).